The sequence spans 388 residues: Protein DVU_0534 (388 aa).

A run of 10 helical transmembrane segments spans residues 10 to 31 (LMTPGNIITGIILVMGLVLTVL), 57 to 78 (LLCGVALAAGGYVTSASCYLFG), 89 to 106 (AITTAFLGYFFVVVALNY), 130 to 144 (EVGLCVATYLTVLFV), 166 to 191 (LTLVLTIFGVVLSTLHQSSLGALFLI), 199 to 222 (LWYSSFLPVFFFISSMVAGLSMVI), 254 to 265 (AASFVLAGYFMI), 291 to 306 (MLGFVALPSFLYALGV), 316 to 328 (FASVLGVLGIVMN), and 354 to 368 (IGISVFIVTSIITVY).

It belongs to the NrfD family.

Its subcellular location is the cell membrane. In terms of biological role, HMWC (high-molecular-weight cytochrome c), ORF2, ORF3, ORF4, ORF5 and ORF6 in the HMC operon form a transmembrane protein complex that allows electron flow from the periplasmic hydrogenase to the cytoplasmic enzymes that catalyze reduction of sulfates. The sequence is that of Protein DVU_0534 from Nitratidesulfovibrio vulgaris (strain ATCC 29579 / DSM 644 / CCUG 34227 / NCIMB 8303 / VKM B-1760 / Hildenborough) (Desulfovibrio vulgaris).